Here is a 424-residue protein sequence, read N- to C-terminus: Histidine--tRNA ligase (424 aa).

The protein belongs to the class-II aminoacyl-tRNA synthetase family. In terms of assembly, homodimer.

Its subcellular location is the cytoplasm. It carries out the reaction tRNA(His) + L-histidine + ATP = L-histidyl-tRNA(His) + AMP + diphosphate + H(+). The sequence is that of Histidine--tRNA ligase from Klebsiella pneumoniae (strain 342).